A 282-amino-acid polypeptide reads, in one-letter code: Acetylglutamate kinase (282 aa).

Substrate contacts are provided by residues G62–G63, R84, and N178.

The protein belongs to the acetylglutamate kinase family. ArgB subfamily.

Its subcellular location is the cytoplasm. The enzyme catalyses N-acetyl-L-glutamate + ATP = N-acetyl-L-glutamyl 5-phosphate + ADP. The protein operates within amino-acid biosynthesis; L-arginine biosynthesis; N(2)-acetyl-L-ornithine from L-glutamate: step 2/4. Its function is as follows. Catalyzes the ATP-dependent phosphorylation of N-acetyl-L-glutamate. The protein is Acetylglutamate kinase of Thermotoga sp. (strain RQ2).